Consider the following 194-residue polypeptide: Putative NAD(P)H nitroreductase YfhC (194 aa).

Residues 20–22, 147–148, and Arg-188 contribute to the FMN site; these read RRS and KI.

The protein belongs to the nitroreductase family. The cofactor is FMN.

The polypeptide is Putative NAD(P)H nitroreductase YfhC (yfhC) (Bacillus subtilis (strain 168)).